Reading from the N-terminus, the 510-residue chain is Polyamine aminopropyltransferase 2 (510 aa).

Transmembrane regions (helical) follow at residues 6–26 (ALLV…ELIA), 38–58 (ILQF…GSWV), 74–94 (LELL…LLFA), 102–122 (LVLY…IPLV), 140–160 (VLTF…LVLA), and 165–185 (LVRT…WTLW). One can recognise a PABS domain in the interval 205–449 (AGMVGAALLA…GEWGFILAAP (245 aa)). The tract at residues 207–456 (MVGAALLAGF…AAPGRADFRP (250 aa)) is spermidine synthase. Gln-244 contacts S-methyl-5'-thioadenosine. Spermidine-binding residues include His-274 and Asp-298. S-methyl-5'-thioadenosine-binding positions include Asp-318 and 352 to 353 (DA). The active-site Proton acceptor is the Asp-370.

It belongs to the spermidine/spermine synthase family. Homodimer or homotetramer.

The protein resides in the cell membrane. It catalyses the reaction S-adenosyl 3-(methylsulfanyl)propylamine + putrescine = S-methyl-5'-thioadenosine + spermidine + H(+). It functions in the pathway amine and polyamine biosynthesis; spermidine biosynthesis; spermidine from putrescine: step 1/1. Its function is as follows. Catalyzes the irreversible transfer of a propylamine group from the amino donor S-adenosylmethioninamine (decarboxy-AdoMet) to putrescine (1,4-diaminobutane) to yield spermidine. The chain is Polyamine aminopropyltransferase 2 from Ralstonia nicotianae (strain ATCC BAA-1114 / GMI1000) (Ralstonia solanacearum).